We begin with the raw amino-acid sequence, 85 residues long: CDC42 small effector protein homolog (85 aa).

Residues C14 and C15 are each lipidated (S-palmitoyl cysteine). In terms of domain architecture, CRIB spans I37–G50. Phosphoserine is present on residues S78 and S81.

It belongs to the CDC42SE/SPEC family.

Its subcellular location is the cytoplasm. The protein localises to the cytoskeleton. It localises to the cell membrane. Probably involved in the organization of the actin cytoskeleton by acting downstream of CDC42, inducing actin filament assembly. In Drosophila melanogaster (Fruit fly), this protein is CDC42 small effector protein homolog (Spec2).